A 576-amino-acid polypeptide reads, in one-letter code: Arginine--tRNA ligase (576 aa).

The 'HIGH' region motif lies at 122 to 132 (PNVAKEMHVGH).

It belongs to the class-I aminoacyl-tRNA synthetase family. Monomer.

It is found in the cytoplasm. It carries out the reaction tRNA(Arg) + L-arginine + ATP = L-arginyl-tRNA(Arg) + AMP + diphosphate. In Mannheimia succiniciproducens (strain KCTC 0769BP / MBEL55E), this protein is Arginine--tRNA ligase.